Here is a 78-residue protein sequence, read N- to C-terminus: Ferredoxin (78 aa).

4Fe-4S ferredoxin-type domains lie at 2 to 29 (FVIT…HEGP) and 30 to 59 (DQYY…QEEF). Positions 8 and 16 each coordinate [3Fe-4S] cluster. C20, C39, C42, and C45 together coordinate [4Fe-4S] cluster. Residue C49 coordinates [3Fe-4S] cluster.

[3Fe-4S] cluster serves as cofactor. [4Fe-4S] cluster is required as a cofactor.

In terms of biological role, ferredoxins are iron-sulfur proteins that transfer electrons in a wide variety of metabolic reactions. The chain is Ferredoxin from Alicyclobacillus acidocaldarius subsp. acidocaldarius (Bacillus acidocaldarius).